The chain runs to 302 residues: Large ribosomal subunit protein uL29m (302 aa).

Belongs to the universal ribosomal protein uL29 family. In terms of assembly, component of the mitochondrial large ribosomal subunit. Mature mitochondrial ribosomes consist of a small (37S) and a large (54S) subunit. The 37S subunit contains at least 33 different proteins and 1 molecule of RNA (15S). The 54S subunit contains at least 45 different proteins and 1 molecule of RNA (21S).

It localises to the mitochondrion. The protein is Large ribosomal subunit protein uL29m (MRPL4) of Debaryomyces hansenii (strain ATCC 36239 / CBS 767 / BCRC 21394 / JCM 1990 / NBRC 0083 / IGC 2968) (Yeast).